The chain runs to 168 residues: Small ribosomal subunit protein uS5c (168 aa).

One can recognise an S5 DRBM domain in the interval Trp17–Phe80.

This sequence belongs to the universal ribosomal protein uS5 family. Part of the 30S ribosomal subunit. Contacts protein S4.

It localises to the plastid. It is found in the chloroplast. In terms of biological role, with S4 and S12 plays an important role in translational accuracy. The chain is Small ribosomal subunit protein uS5c (rps5) from Cyanidium caldarium (Red alga).